The chain runs to 707 residues: Early transcription factor 82 kDa subunit (707 aa).

This sequence belongs to the poxviridae VETF large subunit family. As to quaternary structure, heterodimer of a 70 kDa and a 82 kDa subunit. Part of the early transcription complex composed of ETF, RAP94, and the DNA-directed RNA polymerase.

The protein localises to the virion. Acts with RNA polymerase to initiate transcription from early gene promoters. Is recruited by the RPO-associated protein of 94 kDa (RAP94) to form the early transcription complex, which also contains the core RNA polymerase. ETF heterodimer binds to early gene promoters. In Molluscum contagiosum virus subtype 1 (MOCV), this protein is Early transcription factor 82 kDa subunit (VETFL).